Here is a 41-residue protein sequence, read N- to C-terminus: Trypsin inhibitor (41 aa).

Intrachain disulfides connect cysteine 15-cysteine 26, cysteine 17-cysteine 24, and cysteine 29-cysteine 37.

In terms of biological role, has two active sites that simultaneously bind and inhibit trypsin. The chain is Trypsin inhibitor from Trichosanthes kirilowii (Chinese snake gourd).